Here is a 203-residue protein sequence, read N- to C-terminus: Glutathione S-transferase (203 aa).

A GST N-terminal domain is found at 2–79 (PDYKVYYFNV…YLANQVGLAG (78 aa)). Residues Tyr8, Trp39, Lys43, 49–51 (GQM), and 63–64 (QS) contribute to the glutathione site. One can recognise a GST C-terminal domain in the interval 81 to 203 (DDWENLMIDT…YIAKRPITEV (123 aa)).

Belongs to the GST superfamily. Sigma family. As to quaternary structure, homodimer.

It catalyses the reaction RX + glutathione = an S-substituted glutathione + a halide anion + H(+). Functionally, conjugation of reduced glutathione to a wide number of exogenous and endogenous hydrophobic electrophiles. This is Glutathione S-transferase (GstS1) from Anopheles gambiae (African malaria mosquito).